Here is a 136-residue protein sequence, read N- to C-terminus: Large ribosomal subunit protein bL17 (136 aa).

The protein belongs to the bacterial ribosomal protein bL17 family. Part of the 50S ribosomal subunit. Contacts protein L32.

The chain is Large ribosomal subunit protein bL17 from Rickettsia africae (strain ESF-5).